We begin with the raw amino-acid sequence, 483 residues long: ATP synthase subunit beta, chloroplastic (483 aa).

ATP is bound at residue 163–170 (GGAGVGKT).

Belongs to the ATPase alpha/beta chains family. F-type ATPases have 2 components, CF(1) - the catalytic core - and CF(0) - the membrane proton channel. CF(1) has five subunits: alpha(3), beta(3), gamma(1), delta(1), epsilon(1). CF(0) has four main subunits: a(1), b(1), b'(1) and c(9-12).

It localises to the plastid. The protein localises to the chloroplast thylakoid membrane. It carries out the reaction ATP + H2O + 4 H(+)(in) = ADP + phosphate + 5 H(+)(out). Produces ATP from ADP in the presence of a proton gradient across the membrane. The catalytic sites are hosted primarily by the beta subunits. The protein is ATP synthase subunit beta, chloroplastic of Ostreococcus tauri.